A 370-amino-acid chain; its full sequence is UDP-galactose transporter homolog 1 (370 aa).

10 consecutive transmembrane segments (helical) span residues 22–42 (ALTL…WSIL), 62–82 (IIIN…YNYV), 115–135 (CNVL…SPIG), 145–165 (LAYL…HFIF), 175–195 (YLVA…HVTT), 204–224 (TLLG…TNST), 242–262 (LMSL…IIFH), 280–300 (LIDI…IFII), 307–327 (IILI…SVIL), and 333–353 (SWEQ…EAFI).

It belongs to the nucleotide-sugar transporter family. SLC35B subfamily.

It is found in the endoplasmic reticulum membrane. In terms of biological role, may be involved in specific transport of UDP-Gal from the cytosol to the Golgi lumen. Involved in the maintenance of optimal conditions for the folding of secretory pathway proteins in the endoplasmic reticulum. This is UDP-galactose transporter homolog 1 (HUT1) from Candida albicans (strain SC5314 / ATCC MYA-2876) (Yeast).